An 86-amino-acid polypeptide reads, in one-letter code: Small ribosomal subunit protein uS17 (86 aa).

Belongs to the universal ribosomal protein uS17 family. As to quaternary structure, part of the 30S ribosomal subunit.

In terms of biological role, one of the primary rRNA binding proteins, it binds specifically to the 5'-end of 16S ribosomal RNA. The protein is Small ribosomal subunit protein uS17 of Halalkalibacterium halodurans (strain ATCC BAA-125 / DSM 18197 / FERM 7344 / JCM 9153 / C-125) (Bacillus halodurans).